Reading from the N-terminus, the 585-residue chain is Zinc finger protein 614 (585 aa).

Residues 8–79 (LTLEDVAVEF…DAKIQNKNCP (72 aa)) form the KRAB domain. The segment at 205–227 (HACIECEQTFLRKSQLIYHENIC) adopts a C2H2-type 1; atypical zinc-finger fold. Residues 257–281 (KICIPNEYRKGSTVKSSLITHQQTH) form a C2H2-type 2; degenerate zinc finger. C2H2-type zinc fingers lie at residues 287–309 (YMCS…QRTH), 315–337 (YVCK…QRTH), 343–365 (YICS…QRTH), 371–393 (YMCS…QRSH), 399–421 (YICS…QRTH), 427–449 (YICN…QRTH), 455–477 (YECN…ERCH), 483–505 (FVCT…QRIH), 511–533 (YECN…QRTH), and 539–561 (YGCS…KKMH).

This sequence belongs to the krueppel C2H2-type zinc-finger protein family.

The protein resides in the nucleus. Functionally, may be involved in transcriptional regulation. This chain is Zinc finger protein 614 (ZNF614), found in Homo sapiens (Human).